A 357-amino-acid chain; its full sequence is Alanine racemase (357 aa).

The Proton acceptor; specific for D-alanine role is filled by Lys33. At Lys33 the chain carries N6-(pyridoxal phosphate)lysine. Arg129 lines the substrate pocket. Tyr253 serves as the catalytic Proton acceptor; specific for L-alanine. Met301 is a substrate binding site.

The protein belongs to the alanine racemase family. Homodimer. Requires pyridoxal 5'-phosphate as cofactor.

It carries out the reaction L-alanine = D-alanine. Its pathway is amino-acid biosynthesis; D-alanine biosynthesis; D-alanine from L-alanine: step 1/1. Its function is as follows. Catalyzes the interconversion of L-alanine and D-alanine. Is highly specific for alanine as substrate. May serve both anabolic and catabolic purposes. This chain is Alanine racemase, found in Pseudomonas taetrolens.